Reading from the N-terminus, the 371-residue chain is Cytochrome b (371 aa).

The next 4 helical transmembrane spans lie at 25–45, 69–90, 105–125, and 170–190; these read FGSM…FLAI, WIMQ…YIHI, WLSG…GYVL, and FCAL…IHII. Heme b is bound by residues H75 and H89. Heme b is bound by residues H174 and H188. H193 lines the a ubiquinone pocket. Helical transmembrane passes span 218–238, 280–300, 312–332, and 339–358; these read YKDF…LSVS, LGGT…PFTH, LSQT…WTAT, and FITI…IMNP.

It belongs to the cytochrome b family. In terms of assembly, the cytochrome bc1 complex contains 3 respiratory subunits (MT-CYB, CYC1 and UQCRFS1), 2 core proteins (UQCRC1 and UQCRC2) and probably 6 low-molecular weight proteins. Heme b serves as cofactor.

It is found in the mitochondrion inner membrane. Its function is as follows. Component of the ubiquinol-cytochrome c reductase complex (complex III or cytochrome b-c1 complex) that is part of the mitochondrial respiratory chain. The b-c1 complex mediates electron transfer from ubiquinol to cytochrome c. Contributes to the generation of a proton gradient across the mitochondrial membrane that is then used for ATP synthesis. This is Cytochrome b (MT-CYB) from Micrurus tener microgalbineus (Spotted coral snake).